An 80-amino-acid chain; its full sequence is Putative membrane protein insertion efficiency factor (80 aa).

A disordered region spans residues 61–80; sequence KTGKDPVPDRFSLKRNQEGE. Residues 62-80 are compositionally biased toward basic and acidic residues; sequence TGKDPVPDRFSLKRNQEGE.

The protein belongs to the UPF0161 family.

The protein localises to the cell membrane. Functionally, could be involved in insertion of integral membrane proteins into the membrane. The sequence is that of Putative membrane protein insertion efficiency factor from Streptococcus pneumoniae (strain P1031).